Reading from the N-terminus, the 345-residue chain is 4-hydroxyproline 2-epimerase (345 aa).

Q85 contributes to the substrate binding site. Residue S93 is the Proton acceptor of the active site. Residues 94 to 95 (GS) and D251 contribute to the substrate site. C255 serves as the catalytic Proton donor. A substrate-binding site is contributed by 256–257 (GT).

Belongs to the proline racemase family.

The enzyme catalyses trans-4-hydroxy-L-proline = cis-4-hydroxy-D-proline. Its function is as follows. Catalyzes the epimerization of trans-4-hydroxy-L-proline (t4LHyp) to cis-4-hydroxy-D-proline (c4DHyp). May be involved in a degradation pathway of t4LHyp, which would allow A.tumefaciens to grow on t4LHyp as a sole carbon source. Can also catalyze the epimerization of trans-3-hydroxy-L-proline (t3LHyp) to cis-3-hydroxy-D-proline (c3DHyp) in vitro. Displays no proline racemase activity. This chain is 4-hydroxyproline 2-epimerase, found in Agrobacterium fabrum (strain C58 / ATCC 33970) (Agrobacterium tumefaciens (strain C58)).